The sequence spans 196 residues: Xanthine phosphoribosyltransferase (196 aa).

Residues Leu-26 and Asn-33 each contribute to the xanthine site. Position 134 to 138 (134 to 138) interacts with 5-phospho-alpha-D-ribose 1-diphosphate; it reads ASGEA. Lys-162 contributes to the xanthine binding site.

This sequence belongs to the purine/pyrimidine phosphoribosyltransferase family. Xpt subfamily. In terms of assembly, homodimer.

It localises to the cytoplasm. It carries out the reaction XMP + diphosphate = xanthine + 5-phospho-alpha-D-ribose 1-diphosphate. The protein operates within purine metabolism; XMP biosynthesis via salvage pathway; XMP from xanthine: step 1/1. Its function is as follows. Converts the preformed base xanthine, a product of nucleic acid breakdown, to xanthosine 5'-monophosphate (XMP), so it can be reused for RNA or DNA synthesis. This Moorella thermoacetica (strain ATCC 39073 / JCM 9320) protein is Xanthine phosphoribosyltransferase.